The following is a 280-amino-acid chain: Hydrolase MT0498 (280 aa).

The region spanning 1 to 251 is the CN hydrolase domain; it reads MRIALAQIRS…PQLLVADIDV (251 aa). Residue glutamate 40 is the Proton acceptor of the active site. Residue lysine 110 is the Proton donor of the active site. Cysteine 146 (nucleophile) is an active-site residue.

This sequence belongs to the carbon-nitrogen hydrolase superfamily. NIT1/NIT2 family.

This is Hydrolase MT0498 from Mycobacterium tuberculosis (strain CDC 1551 / Oshkosh).